The following is a 227-amino-acid chain: Probable septum site-determining protein MinC (227 aa).

The protein belongs to the MinC family. In terms of assembly, interacts with MinD and FtsZ.

Functionally, cell division inhibitor that blocks the formation of polar Z ring septums. Rapidly oscillates between the poles of the cell to destabilize FtsZ filaments that have formed before they mature into polar Z rings. Prevents FtsZ polymerization. The protein is Probable septum site-determining protein MinC of Acetivibrio thermocellus (strain ATCC 27405 / DSM 1237 / JCM 9322 / NBRC 103400 / NCIMB 10682 / NRRL B-4536 / VPI 7372) (Clostridium thermocellum).